We begin with the raw amino-acid sequence, 212 residues long: Orotate phosphoribosyltransferase (212 aa).

5-phospho-alpha-D-ribose 1-diphosphate contacts are provided by residues R94, K98, H100, and E120–S128. An orotate-binding site is contributed by S124.

It belongs to the purine/pyrimidine phosphoribosyltransferase family. PyrE subfamily. As to quaternary structure, homodimer. It depends on Mg(2+) as a cofactor.

It carries out the reaction orotidine 5'-phosphate + diphosphate = orotate + 5-phospho-alpha-D-ribose 1-diphosphate. It participates in pyrimidine metabolism; UMP biosynthesis via de novo pathway; UMP from orotate: step 1/2. Catalyzes the transfer of a ribosyl phosphate group from 5-phosphoribose 1-diphosphate to orotate, leading to the formation of orotidine monophosphate (OMP). This chain is Orotate phosphoribosyltransferase, found in Bacillus pumilus (strain SAFR-032).